The primary structure comprises 317 residues: Transaldolase 1 (317 aa).

Lys132 functions as the Schiff-base intermediate with substrate in the catalytic mechanism.

It belongs to the transaldolase family. Type 1 subfamily. In terms of assembly, homodimer.

It is found in the cytoplasm. The catalysed reaction is D-sedoheptulose 7-phosphate + D-glyceraldehyde 3-phosphate = D-erythrose 4-phosphate + beta-D-fructose 6-phosphate. It participates in carbohydrate degradation; pentose phosphate pathway; D-glyceraldehyde 3-phosphate and beta-D-fructose 6-phosphate from D-ribose 5-phosphate and D-xylulose 5-phosphate (non-oxidative stage): step 2/3. Functionally, transaldolase is important for the balance of metabolites in the pentose-phosphate pathway. The protein is Transaldolase 1 of Shigella sonnei (strain Ss046).